Reading from the N-terminus, the 335-residue chain is 4-hydroxythreonine-4-phosphate dehydrogenase (335 aa).

Position 132 (Thr132) interacts with substrate. A divalent metal cation contacts are provided by His163, His208, and His263. 3 residues coordinate substrate: Lys271, Asn280, and Arg289.

It belongs to the PdxA family. As to quaternary structure, homodimer. Zn(2+) is required as a cofactor. Requires Mg(2+) as cofactor. Co(2+) serves as cofactor.

The protein localises to the cytoplasm. The enzyme catalyses 4-(phosphooxy)-L-threonine + NAD(+) = 3-amino-2-oxopropyl phosphate + CO2 + NADH. The protein operates within cofactor biosynthesis; pyridoxine 5'-phosphate biosynthesis; pyridoxine 5'-phosphate from D-erythrose 4-phosphate: step 4/5. Catalyzes the NAD(P)-dependent oxidation of 4-(phosphooxy)-L-threonine (HTP) into 2-amino-3-oxo-4-(phosphooxy)butyric acid which spontaneously decarboxylates to form 3-amino-2-oxopropyl phosphate (AHAP). The chain is 4-hydroxythreonine-4-phosphate dehydrogenase from Zymomonas mobilis subsp. mobilis (strain ATCC 31821 / ZM4 / CP4).